A 316-amino-acid polypeptide reads, in one-letter code: ATP synthase gamma chain (316 aa).

This sequence belongs to the ATPase gamma chain family. As to quaternary structure, F-type ATPases have 2 components, CF(1) - the catalytic core - and CF(0) - the membrane proton channel. CF(1) has five subunits: alpha(3), beta(3), gamma(1), delta(1), epsilon(1). CF(0) has three main subunits: a, b and c.

The protein localises to the cellular thylakoid membrane. Its function is as follows. Produces ATP from ADP in the presence of a proton gradient across the membrane. The gamma chain is believed to be important in regulating ATPase activity and the flow of protons through the CF(0) complex. The polypeptide is ATP synthase gamma chain (Prochlorococcus marinus (strain MIT 9215)).